The sequence spans 89 residues: Small ribosomal subunit protein uS15 (89 aa).

This sequence belongs to the universal ribosomal protein uS15 family. Part of the 30S ribosomal subunit. Forms a bridge to the 50S subunit in the 70S ribosome, contacting the 23S rRNA.

Its function is as follows. One of the primary rRNA binding proteins, it binds directly to 16S rRNA where it helps nucleate assembly of the platform of the 30S subunit by binding and bridging several RNA helices of the 16S rRNA. In terms of biological role, forms an intersubunit bridge (bridge B4) with the 23S rRNA of the 50S subunit in the ribosome. The sequence is that of Small ribosomal subunit protein uS15 from Streptococcus pyogenes serotype M1.